The sequence spans 252 residues: Imidazole glycerol phosphate synthase subunit HisF (252 aa).

Residues Asp-11 and Asp-130 contribute to the active site.

This sequence belongs to the HisA/HisF family. In terms of assembly, heterodimer of HisH and HisF.

The protein resides in the cytoplasm. The catalysed reaction is 5-[(5-phospho-1-deoxy-D-ribulos-1-ylimino)methylamino]-1-(5-phospho-beta-D-ribosyl)imidazole-4-carboxamide + L-glutamine = D-erythro-1-(imidazol-4-yl)glycerol 3-phosphate + 5-amino-1-(5-phospho-beta-D-ribosyl)imidazole-4-carboxamide + L-glutamate + H(+). It functions in the pathway amino-acid biosynthesis; L-histidine biosynthesis; L-histidine from 5-phospho-alpha-D-ribose 1-diphosphate: step 5/9. Functionally, IGPS catalyzes the conversion of PRFAR and glutamine to IGP, AICAR and glutamate. The HisF subunit catalyzes the cyclization activity that produces IGP and AICAR from PRFAR using the ammonia provided by the HisH subunit. This chain is Imidazole glycerol phosphate synthase subunit HisF, found in Lacticaseibacillus paracasei (strain ATCC 334 / BCRC 17002 / CCUG 31169 / CIP 107868 / KCTC 3260 / NRRL B-441) (Lactobacillus paracasei).